The chain runs to 363 residues: Ribosome-binding ATPase YchF (363 aa).

An OBG-type G domain is found at Phe-3–Leu-256. Asn-12–Thr-17 serves as a coordination point for ATP. Mg(2+) is bound by residues Ser-16 and Thr-36. The TGS domain occupies Asn-278–Phe-361.

The protein belongs to the TRAFAC class OBG-HflX-like GTPase superfamily. OBG GTPase family. YchF/OLA1 subfamily. It depends on Mg(2+) as a cofactor.

Its function is as follows. ATPase that binds to both the 70S ribosome and the 50S ribosomal subunit in a nucleotide-independent manner. The chain is Ribosome-binding ATPase YchF from Haemophilus ducreyi (strain 35000HP / ATCC 700724).